Consider the following 114-residue polypeptide: Vesicle-associated membrane protein 2 (114 aa).

Positions 1-11 are enriched in pro residues; that stretch reads MSAPAAGPPAA. The tract at residues 1-31 is disordered; the sequence is MSAPAAGPPAAAPGDGAPQGPPNLTSNRRLQ. At serine 2 the chain carries N-acetylserine. At 2-92 the chain is on the cytoplasmic side; it reads SAPAAGPPAA…KRKYWWKNMK (91 aa). A v-SNARE coiled-coil homology domain is found at 29-89; it reads RLQQTQAQVD…AKLKRKYWWK (61 aa). The helical; Anchor for type IV membrane protein transmembrane segment at 93-111 threads the bilayer; sequence MMIIMGVICAIILIIIIVY. The Vesicular segment spans residues 112 to 114; the sequence is FST.

It belongs to the synaptobrevin family.

Its subcellular location is the cytoplasmic vesicle. The protein localises to the secretory vesicle. It is found in the synaptic vesicle membrane. The protein resides in the cell membrane. Involved in the targeting and/or fusion of transport vesicles to their target membrane. Major SNARE protein of synaptic vesicles which mediates fusion of synaptic vesicles to release neurotransmitters. Essential for fast vesicular exocytosis and activity-dependent neurotransmitter release as well as fast endocytosis that mediates rapid reuse of synaptic vesicles. The protein is Vesicle-associated membrane protein 2 (vamp2) of Xenopus laevis (African clawed frog).